The following is a 276-amino-acid chain: Cis-2,3-dihydrobiphenyl-2,3-diol dehydrogenase (276 aa).

Residue 9–33 (LVTGGGSGLGRAIVDRFVAEGARVA) participates in NAD(+) binding. Position 142 (Ser-142) interacts with substrate. The Proton acceptor role is filled by Tyr-155.

This sequence belongs to the short-chain dehydrogenases/reductases (SDR) family.

It catalyses the reaction (2R,3S)-3-phenylcyclohexa-3,5-diene-1,2-diol + NAD(+) = biphenyl-2,3-diol + NADH + H(+). Its pathway is xenobiotic degradation; biphenyl degradation; 2-hydroxy-2,4-pentadienoate and benzoate from biphenyl: step 2/4. The chain is Cis-2,3-dihydrobiphenyl-2,3-diol dehydrogenase (bphB) from Pseudomonas sp. (strain KKS102).